A 356-amino-acid chain; its full sequence is 45 kDa calcium-binding protein (356 aa).

The signal sequence occupies residues 1–29; that stretch reads MMSRQAFLCSLGSLYLSLLFVFLLMDVYA. A glycan (N-linked (GlcNAc...) asparagine) is linked at Asn33. EF-hand domains lie at 92–127, 131–166, 227–262, 272–307, and 308–343; these read KNRK…KTDE, EAVE…SKGL, MLKF…TVEN, WVKD…MNEY, and NALN…FTGS. Asp105, Asp107, Asp109, Lys111, Glu116, Asp144, Asp146, Asp148, His150, Glu155, Asp240, Asp242, Asp244, Lys246, Glu251, Asp285, Asn287, Asp289, Glu296, Asp321, Asn323, Asn325, His327, and Glu332 together coordinate Ca(2+).

Belongs to the CREC family.

The protein localises to the golgi apparatus lumen. In terms of biological role, may regulate calcium-dependent activities in the endoplasmic reticulum lumen or post-ER compartment. The sequence is that of 45 kDa calcium-binding protein (SDF4) from Gallus gallus (Chicken).